The primary structure comprises 579 residues: 2-succinyl-5-enolpyruvyl-6-hydroxy-3-cyclohexene-1-carboxylate synthase (579 aa).

It belongs to the TPP enzyme family. MenD subfamily. In terms of assembly, homodimer. Mg(2+) serves as cofactor. Mn(2+) is required as a cofactor. Requires thiamine diphosphate as cofactor.

The catalysed reaction is isochorismate + 2-oxoglutarate + H(+) = 5-enolpyruvoyl-6-hydroxy-2-succinyl-cyclohex-3-ene-1-carboxylate + CO2. It functions in the pathway quinol/quinone metabolism; 1,4-dihydroxy-2-naphthoate biosynthesis; 1,4-dihydroxy-2-naphthoate from chorismate: step 2/7. It participates in quinol/quinone metabolism; menaquinone biosynthesis. Functionally, catalyzes the thiamine diphosphate-dependent decarboxylation of 2-oxoglutarate and the subsequent addition of the resulting succinic semialdehyde-thiamine pyrophosphate anion to isochorismate to yield 2-succinyl-5-enolpyruvyl-6-hydroxy-3-cyclohexene-1-carboxylate (SEPHCHC). The sequence is that of 2-succinyl-5-enolpyruvyl-6-hydroxy-3-cyclohexene-1-carboxylate synthase from Oceanobacillus iheyensis (strain DSM 14371 / CIP 107618 / JCM 11309 / KCTC 3954 / HTE831).